Reading from the N-terminus, the 184-residue chain is Structural protein V8 (184 aa).

Residues 14 to 35 (IYNKSNTLTNTPSNPTGNTNTL) are disordered.

Belongs to the sputnik virus V6 family.

The protein resides in the virion. The sequence is that of Structural protein V8 from Sputnik virophage.